The following is a 424-amino-acid chain: Probable methyltransferase EP424R (424 aa).

Positions 103-315 (QIVTNAWLKM…TYIVGKNRLR (213 aa)) constitute an Adrift-type SAM-dependent 2'-O-MTase domain. Positions 135 and 228 each coordinate S-adenosyl-L-methionine. Lys268 functions as the Proton acceptor in the catalytic mechanism.

It localises to the virion. The polypeptide is Probable methyltransferase EP424R (Ornithodoros (relapsing fever ticks)).